The sequence spans 172 residues: 3-hydroxydecanoyl-[acyl-carrier-protein] dehydratase (172 aa).

Residue His71 is part of the active site.

The protein belongs to the thioester dehydratase family. FabA subfamily. In terms of assembly, homodimer.

The protein resides in the cytoplasm. It catalyses the reaction a (3R)-hydroxyacyl-[ACP] = a (2E)-enoyl-[ACP] + H2O. It carries out the reaction (3R)-hydroxydecanoyl-[ACP] = (2E)-decenoyl-[ACP] + H2O. The enzyme catalyses (2E)-decenoyl-[ACP] = (3Z)-decenoyl-[ACP]. It participates in lipid metabolism; fatty acid biosynthesis. Its function is as follows. Necessary for the introduction of cis unsaturation into fatty acids. Catalyzes the dehydration of (3R)-3-hydroxydecanoyl-ACP to E-(2)-decenoyl-ACP and then its isomerization to Z-(3)-decenoyl-ACP. Can catalyze the dehydratase reaction for beta-hydroxyacyl-ACPs with saturated chain lengths up to 16:0, being most active on intermediate chain length. This chain is 3-hydroxydecanoyl-[acyl-carrier-protein] dehydratase, found in Proteus mirabilis (strain HI4320).